The following is a 189-amino-acid chain: Large ribosomal subunit protein uL5 (189 aa).

The protein belongs to the universal ribosomal protein uL5 family. As to quaternary structure, part of the 50S ribosomal subunit; part of the 5S rRNA/L5/L18/L25 subcomplex. Contacts the 5S rRNA and the P site tRNA. Forms a bridge to the 30S subunit in the 70S ribosome.

In terms of biological role, this is one of the proteins that bind and probably mediate the attachment of the 5S RNA into the large ribosomal subunit, where it forms part of the central protuberance. In the 70S ribosome it contacts protein S13 of the 30S subunit (bridge B1b), connecting the 2 subunits; this bridge is implicated in subunit movement. Contacts the P site tRNA; the 5S rRNA and some of its associated proteins might help stabilize positioning of ribosome-bound tRNAs. The polypeptide is Large ribosomal subunit protein uL5 (Corynebacterium jeikeium (strain K411)).